Consider the following 209-residue polypeptide: Kynurenine formamidase (209 aa).

Substrate is bound at residue tryptophan 20. Residues histidine 50, histidine 54, and aspartate 56 each contribute to the Zn(2+) site. Histidine 60 functions as the Proton donor/acceptor in the catalytic mechanism. Zn(2+) contacts are provided by histidine 161 and glutamate 173.

Belongs to the Cyclase 1 superfamily. KynB family. Homodimer. The cofactor is Zn(2+).

The enzyme catalyses N-formyl-L-kynurenine + H2O = L-kynurenine + formate + H(+). It functions in the pathway amino-acid degradation; L-tryptophan degradation via kynurenine pathway; L-kynurenine from L-tryptophan: step 2/2. Its function is as follows. Catalyzes the hydrolysis of N-formyl-L-kynurenine to L-kynurenine, the second step in the kynurenine pathway of tryptophan degradation. This chain is Kynurenine formamidase, found in Bacillus mycoides (strain KBAB4) (Bacillus weihenstephanensis).